The sequence spans 250 residues: Ubiquinone/menaquinone biosynthesis C-methyltransferase UbiE (250 aa).

Residues threonine 73, aspartate 94, 122-123, and serine 139 contribute to the S-adenosyl-L-methionine site; that span reads NA.

It belongs to the class I-like SAM-binding methyltransferase superfamily. MenG/UbiE family.

The enzyme catalyses a 2-demethylmenaquinol + S-adenosyl-L-methionine = a menaquinol + S-adenosyl-L-homocysteine + H(+). It carries out the reaction a 2-methoxy-6-(all-trans-polyprenyl)benzene-1,4-diol + S-adenosyl-L-methionine = a 5-methoxy-2-methyl-3-(all-trans-polyprenyl)benzene-1,4-diol + S-adenosyl-L-homocysteine + H(+). The protein operates within quinol/quinone metabolism; menaquinone biosynthesis; menaquinol from 1,4-dihydroxy-2-naphthoate: step 2/2. It participates in cofactor biosynthesis; ubiquinone biosynthesis. Functionally, methyltransferase required for the conversion of demethylmenaquinol (DMKH2) to menaquinol (MKH2) and the conversion of 2-polyprenyl-6-methoxy-1,4-benzoquinol (DDMQH2) to 2-polyprenyl-3-methyl-6-methoxy-1,4-benzoquinol (DMQH2). The chain is Ubiquinone/menaquinone biosynthesis C-methyltransferase UbiE from Francisella tularensis subsp. tularensis (strain FSC 198).